The sequence spans 122 residues: Small ribosomal subunit protein uS13 (122 aa).

The disordered stretch occupies residues 95-122 (GLPVRGQRTHTNARTRKGPAKSIAGKKK).

It belongs to the universal ribosomal protein uS13 family. In terms of assembly, part of the 30S ribosomal subunit. Forms a loose heterodimer with protein S19. Forms two bridges to the 50S subunit in the 70S ribosome.

In terms of biological role, located at the top of the head of the 30S subunit, it contacts several helices of the 16S rRNA. In the 70S ribosome it contacts the 23S rRNA (bridge B1a) and protein L5 of the 50S subunit (bridge B1b), connecting the 2 subunits; these bridges are implicated in subunit movement. Contacts the tRNAs in the A and P-sites. The sequence is that of Small ribosomal subunit protein uS13 from Nitrobacter winogradskyi (strain ATCC 25391 / DSM 10237 / CIP 104748 / NCIMB 11846 / Nb-255).